The chain runs to 345 residues: Aspartate--ammonia ligase (345 aa).

The protein belongs to the class-II aminoacyl-tRNA synthetase family. AsnA subfamily.

It localises to the cytoplasm. It catalyses the reaction L-aspartate + NH4(+) + ATP = L-asparagine + AMP + diphosphate + H(+). Its pathway is amino-acid biosynthesis; L-asparagine biosynthesis; L-asparagine from L-aspartate (ammonia route): step 1/1. This Parabacteroides distasonis (strain ATCC 8503 / DSM 20701 / CIP 104284 / JCM 5825 / NCTC 11152) protein is Aspartate--ammonia ligase.